The sequence spans 170 residues: Head completion protein (170 aa).

Its subcellular location is the virion. In terms of biological role, head completion protein that closes the capsid once the viral DNA has been packaged. Probably part of the head-tail connector by binding to the portal protein and to the tail completion protein. This is Head completion protein from Escherichia coli (Enterobacteria phage T5).